The following is a 313-amino-acid chain: Formimidoylglutamase (313 aa).

Residues H130, D155, H157, D159, D241, and D243 each contribute to the Mn(2+) site.

It belongs to the arginase family. The cofactor is Mn(2+).

It catalyses the reaction N-formimidoyl-L-glutamate + H2O = formamide + L-glutamate. The protein operates within amino-acid degradation; L-histidine degradation into L-glutamate; L-glutamate from N-formimidoyl-L-glutamate (hydrolase route): step 1/1. Its function is as follows. Catalyzes the conversion of N-formimidoyl-L-glutamate to L-glutamate and formamide. This Salmonella typhi protein is Formimidoylglutamase.